Reading from the N-terminus, the 368-residue chain is Peptide chain release factor 2 (368 aa).

At glutamine 249 the chain carries N5-methylglutamine.

This sequence belongs to the prokaryotic/mitochondrial release factor family. Methylated by PrmC. Methylation increases the termination efficiency of RF2.

Its subcellular location is the cytoplasm. In terms of biological role, peptide chain release factor 2 directs the termination of translation in response to the peptide chain termination codons UGA and UAA. The chain is Peptide chain release factor 2 from Rhodococcus erythropolis (strain PR4 / NBRC 100887).